The primary structure comprises 240 residues: MSSLTLFIFFLQLFIFTSSVSGISIKRCTEEENNTWEIEVGLCIQTENFRAIKTGCYKIQGPGGLLTEGNGFKIFAHDDCSKEETQNNFILDSVNKAVYALGKYVYMEISTSNITTLYSLPQCAKRISLSISCDQVTTEMKSYVESVSFKDYDLEFVITTDISCVKHVSSSVIVRNECEKKYISTGKKIFGFNNKIDCSAVKFSEHVNYLKTCSVGKFDRKKYYEHQHNYIKKIFHHNEL.

This sequence belongs to the poxviruses B9 family.

This is T4 protein from Sheeppox virus (strain KS-1) (SPPV).